The following is a 122-amino-acid chain: Large ribosomal subunit protein uL14 (122 aa).

Belongs to the universal ribosomal protein uL14 family. In terms of assembly, part of the 50S ribosomal subunit. Forms a cluster with proteins L3 and L19. In the 70S ribosome, L14 and L19 interact and together make contacts with the 16S rRNA in bridges B5 and B8.

In terms of biological role, binds to 23S rRNA. Forms part of two intersubunit bridges in the 70S ribosome. The sequence is that of Large ribosomal subunit protein uL14 from Mycobacterium ulcerans (strain Agy99).